The following is a 300-amino-acid chain: MKIVVGSRGSKLALTQTNWVIDKIKQKYPQIQFEVKIISTKGDRIQHIALDKIGDKGLFVKEIEEQLISGDIDMAVHSMKDMSTEMPEELKFSYVPKREDYRDVLILNKKYNSIDELPMNAKIGTGSKRRKYQLLQYRDDLNIVPIRGNVETRINKIEMENLHGVVLASAGIKRLNIQEKLDYNIFYLNEDIMLPSPAQGILALEIRKDREDLEEILKSIEDKNSSIQAVAERAFLKGVNGGCHVPIGAICNINKDNVELTGLLGKEDGSKIIRKSLGGKIEDAEKIGYELAEIVLKEIN.

The residue at position 243 (C243) is an S-(dipyrrolylmethanemethyl)cysteine.

The protein belongs to the HMBS family. Monomer. Dipyrromethane serves as cofactor.

The catalysed reaction is 4 porphobilinogen + H2O = hydroxymethylbilane + 4 NH4(+). It participates in porphyrin-containing compound metabolism; protoporphyrin-IX biosynthesis; coproporphyrinogen-III from 5-aminolevulinate: step 2/4. Tetrapolymerization of the monopyrrole PBG into the hydroxymethylbilane pre-uroporphyrinogen in several discrete steps. This chain is Porphobilinogen deaminase, found in Clostridium novyi (strain NT).